The following is a 132-amino-acid chain: Small ribosomal subunit protein uS8 (132 aa).

It belongs to the universal ribosomal protein uS8 family. In terms of assembly, part of the 30S ribosomal subunit. Contacts proteins S5 and S12.

Its function is as follows. One of the primary rRNA binding proteins, it binds directly to 16S rRNA central domain where it helps coordinate assembly of the platform of the 30S subunit. This chain is Small ribosomal subunit protein uS8, found in Macrococcus caseolyticus (strain JCSC5402) (Macrococcoides caseolyticum).